Consider the following 262-residue polypeptide: NAC domain-containing protein 71 (262 aa).

An NAC domain is found at 6 to 160 (LPPGFRFHPT…AFALCRVVKK (155 aa)). The DNA-binding element occupies 107-166 (AGYRKTLVFYEGRAPLGDRTNWFMHEYRLCDIDDHSQKSPNFKGAFALCRVVKKNELKKN).

The protein localises to the nucleus. Transcription factor involved in tissue reunion of wounded inflorescence stems. Required for the division of pith cells in the reunion process, which is dependent on polar-transported auxin and the wound-inducible hormones ethylene and jasmonate. Binds to the promoters of XTH19 and XTH20 to induce their expression via auxin signaling. XTH19 and XTH20 are involved in cell proliferation in the tissue reunion process of incised stems. Involved in hypocotyl graft union formation. Required for the auxin- mediated promotion of vascular tissue proliferation during hypocotyl graft attachment. The protein is NAC domain-containing protein 71 of Arabidopsis thaliana (Mouse-ear cress).